Here is a 435-residue protein sequence, read N- to C-terminus: Methionine aminopeptidase 2 (435 aa).

The tract at residues 1 to 87 is disordered; the sequence is MAAQVADGVA…TQTKPPRVPV (87 aa). Residues 10-19 show a composition bias toward basic and acidic residues; sequence ADLKLDDTKS. Residues 20–29 are compositionally biased toward polar residues; the sequence is KPTNGTTQNG. Residues 32–46 show a composition bias toward acidic residues; the sequence is EHEDSDDDNEGEEGA. Residues 55 to 68 show a composition bias toward basic residues; sequence KKKKKRKPRKKKKA. Residue H199 participates in substrate binding. D219, D230, and H299 together coordinate a divalent metal cation. H307 is a binding site for substrate. Residues E332 and E427 each coordinate a divalent metal cation.

Belongs to the peptidase M24A family. Methionine aminopeptidase eukaryotic type 2 subfamily. It depends on Co(2+) as a cofactor. Requires Zn(2+) as cofactor. Mn(2+) serves as cofactor. The cofactor is Fe(2+).

The protein resides in the cytoplasm. The enzyme catalyses Release of N-terminal amino acids, preferentially methionine, from peptides and arylamides.. In terms of biological role, cotranslationally removes the N-terminal methionine from nascent proteins. The N-terminal methionine is often cleaved when the second residue in the primary sequence is small and uncharged (Met-Ala-, Cys, Gly, Pro, Ser, Thr, or Val). The polypeptide is Methionine aminopeptidase 2 (Phaeosphaeria nodorum (strain SN15 / ATCC MYA-4574 / FGSC 10173) (Glume blotch fungus)).